A 287-amino-acid chain; its full sequence is IQ domain-containing protein K (287 aa).

The protein is IQ domain-containing protein K (IQCK) of Homo sapiens (Human).